The primary structure comprises 397 residues: Beta sliding clamp (397 aa).

This sequence belongs to the beta sliding clamp family. As to quaternary structure, forms a ring-shaped head-to-tail homodimer around DNA which binds and tethers DNA polymerases and other proteins to the DNA. The DNA replisome complex has a single clamp-loading complex (3 tau and 1 each of delta, delta', psi and chi subunits) which binds 3 Pol III cores (1 core on the leading strand and 2 on the lagging strand) each with a beta sliding clamp dimer. Additional proteins in the replisome are other copies of gamma, psi and chi, Ssb, DNA helicase and RNA primase.

The protein localises to the cytoplasm. Its function is as follows. Confers DNA tethering and processivity to DNA polymerases and other proteins. Acts as a clamp, forming a ring around DNA (a reaction catalyzed by the clamp-loading complex) which diffuses in an ATP-independent manner freely and bidirectionally along dsDNA. Initially characterized for its ability to contact the catalytic subunit of DNA polymerase III (Pol III), a complex, multichain enzyme responsible for most of the replicative synthesis in bacteria; Pol III exhibits 3'-5' exonuclease proofreading activity. The beta chain is required for initiation of replication as well as for processivity of DNA replication. The sequence is that of Beta sliding clamp (dnaN) from Mycolicibacterium smegmatis (strain ATCC 700084 / mc(2)155) (Mycobacterium smegmatis).